The following is a 749-amino-acid chain: 1,4-alpha-glucan branching enzyme GlgB (749 aa).

The Nucleophile role is filled by D427. Residue E480 is the Proton donor of the active site.

It belongs to the glycosyl hydrolase 13 family. GlgB subfamily. In terms of assembly, monomer.

The enzyme catalyses Transfers a segment of a (1-&gt;4)-alpha-D-glucan chain to a primary hydroxy group in a similar glucan chain.. Its pathway is glycan biosynthesis; glycogen biosynthesis. Its function is as follows. Catalyzes the formation of the alpha-1,6-glucosidic linkages in glycogen by scission of a 1,4-alpha-linked oligosaccharide from growing alpha-1,4-glucan chains and the subsequent attachment of the oligosaccharide to the alpha-1,6 position. The protein is 1,4-alpha-glucan branching enzyme GlgB of Thermobifida fusca (strain YX).